A 323-amino-acid chain; its full sequence is Cytochrome c biogenesis protein CcsA (323 aa).

8 helical membrane passes run 17–37 (VVSIVISIHLITLFVNQIVGF), 44–64 (GMIITFLCITGLLITRWFFSG), 68–88 (FSDLYESLIFLSWGFSIFYMV), 98–118 (LSTIIAPSVIFTQGFATSGLL), 143–163 (MILGYAALLCGSLLSVAILVI), 229–249 (IISLGFIFLTIGILSGAVWAN), 262–279 (ETWAFITWTIFAIYLHSR), and 291–311 (IVASIGFLIIWICYFGVNLLG).

This sequence belongs to the CcmF/CycK/Ccl1/NrfE/CcsA family. May interact with Ccs1.

Its subcellular location is the plastid. It is found in the chloroplast thylakoid membrane. Its function is as follows. Required during biogenesis of c-type cytochromes (cytochrome c6 and cytochrome f) at the step of heme attachment. The protein is Cytochrome c biogenesis protein CcsA of Lotus japonicus (Lotus corniculatus var. japonicus).